The sequence spans 260 residues: Carbonic anhydrase (260 aa).

The interval 1–31 is disordered; it reads MAHAWGYGPADGPESWAESFPIANGPRQSPI. The Alpha-carbonic anhydrase domain maps to 3-259; that stretch reads HAWGYGPADG…LKGRKVRASF (257 aa). The active-site Proton acceptor is the His64. Residues His94, His96, and His119 each coordinate Zn(2+). Tyr127 is an active-site residue. 198–199 contributes to the substrate binding site; the sequence is TT.

This sequence belongs to the alpha-carbonic anhydrase family. Zn(2+) is required as a cofactor.

It catalyses the reaction hydrogencarbonate + H(+) = CO2 + H2O. Reversible hydration of carbon dioxide. This Danio rerio (Zebrafish) protein is Carbonic anhydrase (cahz).